The primary structure comprises 131 residues: Single-stranded DNA-binding protein 1 (131 aa).

One can recognise an SSB domain in the interval 1-103 (MYNKVIAIGR…VLCQSFQLLE (103 aa)).

Homotetramer.

The sequence is that of Single-stranded DNA-binding protein 1 (ssb1) from Streptococcus pyogenes serotype M6 (strain ATCC BAA-946 / MGAS10394).